Reading from the N-terminus, the 82-residue chain is Cytochrome b559 subunit alpha (82 aa).

Residues 22 to 36 (VIHAVTLPSIFLAGY) form a helical membrane-spanning segment. Residue H24 participates in heme binding.

The protein belongs to the PsbE/PsbF family. As to quaternary structure, heterodimer of an alpha subunit and a beta subunit. PSII is composed of 1 copy each of membrane proteins PsbA, PsbB, PsbC, PsbD, PsbE, PsbF, PsbH, PsbI, PsbJ, PsbK, PsbL, PsbM, PsbT, PsbX, PsbY, Psb30/Ycf12, peripheral proteins PsbO, CyanoQ (PsbQ), PsbU, PsbV and a large number of cofactors. It forms dimeric complexes. Heme b is required as a cofactor.

It is found in the cellular thylakoid membrane. In terms of biological role, this b-type cytochrome is tightly associated with the reaction center of photosystem II (PSII). PSII is a light-driven water:plastoquinone oxidoreductase that uses light energy to abstract electrons from H(2)O, generating O(2) and a proton gradient subsequently used for ATP formation. It consists of a core antenna complex that captures photons, and an electron transfer chain that converts photonic excitation into a charge separation. This Prochlorococcus marinus (strain MIT 9303) protein is Cytochrome b559 subunit alpha.